A 170-amino-acid chain; its full sequence is Transcription factor E (170 aa).

One can recognise an HTH TFE/IIEalpha-type domain in the interval 1–93; sequence MKDVYLYIVE…TWYVNDEVIS (93 aa).

This sequence belongs to the TFE family. As to quaternary structure, monomer. Interaction with RNA polymerase subunits RpoF and RpoE is necessary for Tfe stimulatory transcription activity. Able to interact with Tbp and RNA polymerase in the absence of DNA promoter. Interacts both with the preinitiation and elongation complexes.

Functionally, transcription factor that plays a role in the activation of archaeal genes transcribed by RNA polymerase. Facilitates transcription initiation by enhancing TATA-box recognition by TATA-box-binding protein (Tbp), and transcription factor B (Tfb) and RNA polymerase recruitment. Not absolutely required for transcription in vitro, but particularly important in cases where Tbp or Tfb function is not optimal. It dynamically alters the nucleic acid-binding properties of RNA polymerases by stabilizing the initiation complex and destabilizing elongation complexes. Seems to translocate with the RNA polymerase following initiation and acts by binding to the non template strand of the transcription bubble in elongation complexes. The protein is Transcription factor E of Pyrobaculum calidifontis (strain DSM 21063 / JCM 11548 / VA1).